A 95-amino-acid chain; its full sequence is UPF0473 protein CD630_12860 (95 aa).

The protein belongs to the UPF0473 family.

This is UPF0473 protein CD630_12860 from Clostridioides difficile (strain 630) (Peptoclostridium difficile).